Reading from the N-terminus, the 243-residue chain is High affinity immunoglobulin epsilon receptor subunit beta (243 aa).

Positions 1–48 (MDTENKSRADLALPNPQESPSAPDIELLEASPPAKALPEKPASPPPQQ) are disordered. Topologically, residues 1 to 59 (MDTENKSRADLALPNPQESPSAPDIELLEASPPAKALPEKPASPPPQQTWQSFLKKELE) are cytoplasmic. Residues 60–79 (FLGVTQVLVGLICLCFGTVV) traverse the membrane as a helical segment. The Extracellular segment spans residues 80 to 97 (CSTLQTSDFDDEVLLLYR). A helical membrane pass occupies residues 98 to 117 (AGYPFWGAVLFVLSGFLSIM). Residues 118–130 (SERKNTLYLVRGS) are Cytoplasmic-facing. Residues 131–150 (LGANIVSSIAAGLGIAILIL) traverse the membrane as a helical segment. Over 151–179 (NLSNNSAYMNYCKDITEDDGCFVTSFITE) the chain is Extracellular. The helical transmembrane segment at 180-199 (LVLMLLFLTILAFCSAVLLI) threads the bilayer. Residues 200–243 (IYRIGQEFERSKVPDDRLYEELHVYSPIYSALEDTREASAPVVS) lie on the Cytoplasmic side of the membrane. Tyr218 and Tyr224 each carry phosphotyrosine. Residue Ser225 is modified to Phosphoserine. Tyr228 bears the Phosphotyrosine mark.

The protein belongs to the MS4A family. As to quaternary structure, tetramer of an alpha chain, a beta chain, and two disulfide linked gamma chains. Binds LILRB1. Interacts with FES/FPS and LYN. Interacts with FGR. Post-translationally, phosphorylated on tyrosine residues by LYN.

Its subcellular location is the membrane. Its function is as follows. High affinity receptor that binds to the Fc region of immunoglobulins epsilon. Aggregation of FCER1 by multivalent antigens is required for the full mast cell response, including the release of preformed mediators (such as histamine) by degranulation and de novo production of lipid mediators and cytokines. Also mediates the secretion of important lymphokines. Binding of allergen to receptor-bound IgE leads to cell activation and the release of mediators responsible for the manifestations of allergy. The polypeptide is High affinity immunoglobulin epsilon receptor subunit beta (Ms4a2) (Rattus norvegicus (Rat)).